Here is a 401-residue protein sequence, read N- to C-terminus: CCA-adding enzyme (401 aa).

2 residues coordinate ATP: Gly-32 and Arg-35. CTP contacts are provided by Gly-32 and Arg-35. Mg(2+)-binding residues include Asp-45 and Asp-47. Residues Arg-116, Asp-159, Arg-162, Arg-165, and Arg-168 each coordinate ATP. CTP is bound by residues Arg-116, Asp-159, Arg-162, Arg-165, and Arg-168.

Belongs to the tRNA nucleotidyltransferase/poly(A) polymerase family. Bacterial CCA-adding enzyme type 3 subfamily. Homodimer. Mg(2+) is required as a cofactor.

It carries out the reaction a tRNA precursor + 2 CTP + ATP = a tRNA with a 3' CCA end + 3 diphosphate. The enzyme catalyses a tRNA with a 3' CCA end + 2 CTP + ATP = a tRNA with a 3' CCACCA end + 3 diphosphate. Functionally, catalyzes the addition and repair of the essential 3'-terminal CCA sequence in tRNAs without using a nucleic acid template. Adds these three nucleotides in the order of C, C, and A to the tRNA nucleotide-73, using CTP and ATP as substrates and producing inorganic pyrophosphate. tRNA 3'-terminal CCA addition is required both for tRNA processing and repair. Also involved in tRNA surveillance by mediating tandem CCA addition to generate a CCACCA at the 3' terminus of unstable tRNAs. While stable tRNAs receive only 3'-terminal CCA, unstable tRNAs are marked with CCACCA and rapidly degraded. The chain is CCA-adding enzyme from Leuconostoc mesenteroides subsp. mesenteroides (strain ATCC 8293 / DSM 20343 / BCRC 11652 / CCM 1803 / JCM 6124 / NCDO 523 / NBRC 100496 / NCIMB 8023 / NCTC 12954 / NRRL B-1118 / 37Y).